Reading from the N-terminus, the 160-residue chain is Transcription elongation factor GreA (160 aa).

A coiled-coil region spans residues M1–I31.

Belongs to the GreA/GreB family.

Functionally, necessary for efficient RNA polymerase transcription elongation past template-encoded arresting sites. The arresting sites in DNA have the property of trapping a certain fraction of elongating RNA polymerases that pass through, resulting in locked ternary complexes. Cleavage of the nascent transcript by cleavage factors such as GreA or GreB allows the resumption of elongation from the new 3'terminus. GreA releases sequences of 2 to 3 nucleotides. In Streptococcus suis (strain 98HAH33), this protein is Transcription elongation factor GreA.